We begin with the raw amino-acid sequence, 208 residues long: ATP phosphoribosyltransferase (208 aa).

It belongs to the ATP phosphoribosyltransferase family. Short subfamily. As to quaternary structure, heteromultimer composed of HisG and HisZ subunits.

The protein localises to the cytoplasm. It catalyses the reaction 1-(5-phospho-beta-D-ribosyl)-ATP + diphosphate = 5-phospho-alpha-D-ribose 1-diphosphate + ATP. Its pathway is amino-acid biosynthesis; L-histidine biosynthesis; L-histidine from 5-phospho-alpha-D-ribose 1-diphosphate: step 1/9. Functionally, catalyzes the condensation of ATP and 5-phosphoribose 1-diphosphate to form N'-(5'-phosphoribosyl)-ATP (PR-ATP). Has a crucial role in the pathway because the rate of histidine biosynthesis seems to be controlled primarily by regulation of HisG enzymatic activity. The polypeptide is ATP phosphoribosyltransferase (Hydrogenovibrio crunogenus (strain DSM 25203 / XCL-2) (Thiomicrospira crunogena)).